The primary structure comprises 480 residues: MSQEISYTPDVAELLDFDKKHIWHPYTSLSSPLNVYPVKSAHGCKLVLDTDSPVDVEVIDAMSSWWCVIHGYNNPELNEALTKQMLKFSHVLLGGFTHKGAVNLVQKLLKVIDEPSLQYCFLADSGSVAVEVALKMALQSNMSGEATKNRTKFLTIKNGYHGDTFGAMSVCDPENSMHHIYNDRLSENIFAQAPSIVDGLPTSQNGFEDHWNAEEVTDLKKQFELHSDKICAVILEPILQGAGGLRPYHPQFLIEVQKLCNQYDVLFIMDEIATGFGRTGEIFAFKHCQKYQDQHGISPSDQIKVVPDILCVGKGLTSGYMTMSAVVVNDKVASRISSPNSPTGGCFMHGPTFMGNALACSVAEKSMDILLRGEWRKQVSAIENQIYRELYQYIKNPDNGLIGTVVKRVSVIGAVGIVELYKKTDPEWFQKKFISKGVHIRPFNCLCYIMPPYVITTEELTKVNQVLIEVLHEWKSHINQ.

126-127 (GS) is a pyridoxal 5'-phosphate binding site. Y160 is a binding site for substrate. D270 contacts pyridoxal 5'-phosphate. Residue K314 is modified to N6-(pyridoxal phosphate)lysine. G350 is a substrate binding site. Pyridoxal 5'-phosphate is bound at residue 351-352 (PT). R441 serves as a coordination point for substrate.

Belongs to the class-III pyridoxal-phosphate-dependent aminotransferase family. BioA subfamily. The cofactor is pyridoxal 5'-phosphate.

It catalyses the reaction (8S)-8-amino-7-oxononanoate + S-adenosyl-L-methionine = S-adenosyl-4-methylsulfanyl-2-oxobutanoate + (7R,8S)-7,8-diammoniononanoate. It functions in the pathway cofactor biosynthesis; biotin biosynthesis; 7,8-diaminononanoate from 8-amino-7-oxononanoate (SAM route): step 1/1. Catalyzes the transfer of the alpha-amino group from S-adenosyl-L-methionine (SAM) to 7-keto-8-aminopelargonic acid (KAPA) to form 7,8-diaminopelargonic acid (DAPA). It is the only aminotransferase known to utilize SAM as an amino donor. This chain is Adenosylmethionine-8-amino-7-oxononanoate aminotransferase, found in Saccharomyces cerevisiae (strain ATCC 204508 / S288c) (Baker's yeast).